Consider the following 582-residue polypeptide: Dihydroxy-acid dehydratase 3 (582 aa).

C67 provides a ligand contact to [2Fe-2S] cluster. D99 provides a ligand contact to Mg(2+). C140 is a [2Fe-2S] cluster binding site. The Mg(2+) site is built by D141 and K142. Position 142 is an N6-carboxylysine (K142). C212 is a binding site for [2Fe-2S] cluster. E462 contributes to the Mg(2+) binding site. Catalysis depends on S488, which acts as the Proton acceptor.

It belongs to the IlvD/Edd family. As to quaternary structure, homodimer. [2Fe-2S] cluster is required as a cofactor. The cofactor is Mg(2+).

The enzyme catalyses (2R)-2,3-dihydroxy-3-methylbutanoate = 3-methyl-2-oxobutanoate + H2O. It catalyses the reaction (2R,3R)-2,3-dihydroxy-3-methylpentanoate = (S)-3-methyl-2-oxopentanoate + H2O. The protein operates within amino-acid biosynthesis; L-isoleucine biosynthesis; L-isoleucine from 2-oxobutanoate: step 3/4. It participates in amino-acid biosynthesis; L-valine biosynthesis; L-valine from pyruvate: step 3/4. Its function is as follows. Functions in the biosynthesis of branched-chain amino acids. Catalyzes the dehydration of (2R,3R)-2,3-dihydroxy-3-methylpentanoate (2,3-dihydroxy-3-methylvalerate) into 2-oxo-3-methylpentanoate (2-oxo-3-methylvalerate) and of (2R)-2,3-dihydroxy-3-methylbutanoate (2,3-dihydroxyisovalerate) into 2-oxo-3-methylbutanoate (2-oxoisovalerate), the penultimate precursor to L-isoleucine and L-valine, respectively. In Bradyrhizobium diazoefficiens (strain JCM 10833 / BCRC 13528 / IAM 13628 / NBRC 14792 / USDA 110), this protein is Dihydroxy-acid dehydratase 3.